Consider the following 119-residue polypeptide: Large ribosomal subunit protein bL19 (119 aa).

It belongs to the bacterial ribosomal protein bL19 family.

Functionally, this protein is located at the 30S-50S ribosomal subunit interface and may play a role in the structure and function of the aminoacyl-tRNA binding site. This is Large ribosomal subunit protein bL19 from Leuconostoc citreum (strain KM20).